An 87-amino-acid chain; its full sequence is Large ribosomal subunit protein eL31 (87 aa).

It belongs to the eukaryotic ribosomal protein eL31 family.

The chain is Large ribosomal subunit protein eL31 from Methanosphaerula palustris (strain ATCC BAA-1556 / DSM 19958 / E1-9c).